A 262-amino-acid chain; its full sequence is Taurine import ATP-binding protein TauB (262 aa).

The ABC transporter domain maps to 4–233 (LELERISAQY…RYAAGESARA (230 aa)). 38–45 (GPSGSGKT) lines the ATP pocket.

The protein belongs to the ABC transporter superfamily. Taurine importer (TC 3.A.1.17.1) family. The complex is composed of two ATP-binding proteins (TauB), two transmembrane proteins (TauC) and a solute-binding protein (TauA).

The protein resides in the cell inner membrane. The catalysed reaction is taurine(out) + ATP + H2O = taurine(in) + ADP + phosphate + H(+). Its function is as follows. Part of the ABC transporter complex TauABC involved in taurine import. Responsible for energy coupling to the transport system. This is Taurine import ATP-binding protein TauB from Pseudomonas putida (strain ATCC 47054 / DSM 6125 / CFBP 8728 / NCIMB 11950 / KT2440).